The following is a 240-amino-acid chain: 4-hydroxy-tetrahydrodipicolinate reductase (240 aa).

Position 7-12 (7-12 (GLSGTM)) interacts with NAD(+). Lys-35 lines the NADP(+) pocket. Residues 74–76 (GTT) and 98–101 (ATNM) contribute to the NAD(+) site. Catalysis depends on His-131, which acts as the Proton donor/acceptor. Residue His-132 coordinates (S)-2,3,4,5-tetrahydrodipicolinate. The active-site Proton donor is the Lys-135. Residue 141 to 142 (GS) coordinates (S)-2,3,4,5-tetrahydrodipicolinate.

It belongs to the DapB family.

It localises to the cytoplasm. It catalyses the reaction (S)-2,3,4,5-tetrahydrodipicolinate + NAD(+) + H2O = (2S,4S)-4-hydroxy-2,3,4,5-tetrahydrodipicolinate + NADH + H(+). The enzyme catalyses (S)-2,3,4,5-tetrahydrodipicolinate + NADP(+) + H2O = (2S,4S)-4-hydroxy-2,3,4,5-tetrahydrodipicolinate + NADPH + H(+). It functions in the pathway amino-acid biosynthesis; L-lysine biosynthesis via DAP pathway; (S)-tetrahydrodipicolinate from L-aspartate: step 4/4. Functionally, catalyzes the conversion of 4-hydroxy-tetrahydrodipicolinate (HTPA) to tetrahydrodipicolinate. This is 4-hydroxy-tetrahydrodipicolinate reductase from Alkaliphilus metalliredigens (strain QYMF).